The following is a 118-amino-acid chain: uncharacterized protein (118 aa).

Residues 95–115 (IIINLVIILAMYAPEIIGKLL) form a helical membrane-spanning segment.

Belongs to the M.jannaschii MJ0023/MJ0349/MJ1072/MJ1074/MJ1107/MJECL16 family.

The protein resides in the membrane. This is an uncharacterized protein from Methanocaldococcus jannaschii (strain ATCC 43067 / DSM 2661 / JAL-1 / JCM 10045 / NBRC 100440) (Methanococcus jannaschii).